The primary structure comprises 560 residues: SWI/SNF complex subunit SWI3A homolog (560 aa).

Over residues 1–13 the composition is skewed to low complexity; sequence MSPPVAGAASSGD. The segment at 1 to 22 is disordered; it reads MSPPVAGAASSGDGPPGRPPRE. The SWIRM domain maps to 24–127; sequence YTIPASSGWF…FSASPSRPEA (104 aa). One can recognise an SANT domain in the interval 242–293; the sequence is HSSSAWTDAETLLLLEGVLKHGDDWDLIAQHVRTKNKSECIARLIQLPFGEH. The segment covering 311 to 330 has biased composition (polar residues); sequence TTDGKVNKSTVKESSSQPTE. Disordered regions lie at residues 311–352 and 414–445; these read TTDG…EEHP and QTRA…PDKK. Positions 331-342 are enriched in acidic residues; the sequence is TVDDMQIDGNED. Composition is skewed to basic and acidic residues over residues 343-352 and 424-445; these read GADKSVEEHP and RQSD…PDKK.

As to quaternary structure, interacts with LFR.

It localises to the nucleus. Functionally, component of a multiprotein complex equivalent of the SWI/SNF complex, an ATP-dependent chromatin-remodeling complex, which is required for the positive and negative regulation of gene expression of a large number of genes. It changes chromatin structure by altering DNA-histone contacts within a nucleosome, leading eventually to a change in nucleosome position, thus facilitating or repressing binding of gene-specific transcription factors. This is SWI/SNF complex subunit SWI3A homolog from Oryza sativa subsp. japonica (Rice).